A 92-amino-acid chain; its full sequence is RQC P-site tRNA stabilizing factor (92 aa).

Residues 5-65 enclose the S4 RNA-binding domain; the sequence is MRLDKYLKVS…GPKIVTAKIE (61 aa).

Belongs to the RqcP family. Associates with stalled 50S ribosomal subunits. Binds to RqcH, 23S rRNA and the P-site tRNA. Does not require RqcH for association with 50S subunits.

In terms of biological role, key component of the ribosome quality control system (RQC), a ribosome-associated complex that mediates the extraction of incompletely synthesized nascent chains from stalled ribosomes and their subsequent degradation. RqcH recruits Ala-charged tRNA, and with RqcP directs the elongation of stalled nascent chains on 50S ribosomal subunits, leading to non-templated C-terminal alanine extensions (Ala tail). The Ala tail promotes nascent chain degradation. RqcP is associated with the translocation-like movement of the peptidyl-tRNA from the A-site into the P-site. In Listeria monocytogenes serovar 1/2a (strain ATCC BAA-679 / EGD-e), this protein is RQC P-site tRNA stabilizing factor.